Consider the following 122-residue polypeptide: Large ribosomal subunit protein uL14 (122 aa).

It belongs to the universal ribosomal protein uL14 family. In terms of assembly, part of the 50S ribosomal subunit. Forms a cluster with proteins L3 and L19. In the 70S ribosome, L14 and L19 interact and together make contacts with the 16S rRNA in bridges B5 and B8.

Its function is as follows. Binds to 23S rRNA. Forms part of two intersubunit bridges in the 70S ribosome. The sequence is that of Large ribosomal subunit protein uL14 from Macrococcus caseolyticus (strain JCSC5402) (Macrococcoides caseolyticum).